Here is a 523-residue protein sequence, read N- to C-terminus: 2-isopropylmalate synthase (523 aa).

Residues 5–267 enclose the Pyruvate carboxyltransferase domain; that stretch reads VIIFDTTLRD…HTAINHQEIW (263 aa). D14, H202, H204, and N238 together coordinate Mn(2+). The segment at 392–523 is regulatory domain; the sequence is RLDYFSVQSG…QHNENNKETV (132 aa).

The protein belongs to the alpha-IPM synthase/homocitrate synthase family. LeuA type 1 subfamily. In terms of assembly, homodimer. The cofactor is Mn(2+).

The protein resides in the cytoplasm. The enzyme catalyses 3-methyl-2-oxobutanoate + acetyl-CoA + H2O = (2S)-2-isopropylmalate + CoA + H(+). It functions in the pathway amino-acid biosynthesis; L-leucine biosynthesis; L-leucine from 3-methyl-2-oxobutanoate: step 1/4. In terms of biological role, catalyzes the condensation of the acetyl group of acetyl-CoA with 3-methyl-2-oxobutanoate (2-ketoisovalerate) to form 3-carboxy-3-hydroxy-4-methylpentanoate (2-isopropylmalate). The chain is 2-isopropylmalate synthase from Shigella sonnei (strain Ss046).